The chain runs to 818 residues: MIDDILDKMTLEEQVSLLSGADFWTTVAIERLGVPKIKVTDGPNGARGGGSLVGGVKSACFPVAIALGATWDPELIERAGVALGGQAKSKGASVLLAPTVNIHRSGLNGRNFECYSEDPALTAACAVAYINGVQSQGVAATIKHFVANESEIERQTMSSDVDERTLREIYLPPFEEAVKKAGVKAVMSSYNKLNGTYTSENPWLLTKVLREEWGFDGVVMSDWFGSHSTAETINAGLDLEMPGPWRDRGEKLVAAVREGKVKAETVRASARRILLLLERVGAFEKAPDLAEHALDLPEDRALIRQLGAEGAVLLKNDGVLPLAKSSFDQIAVIGPNAASARVMGGGSARIAAHYTVSPLEGIRAALSNANSLRHAVGCNNNRLIDVFSGEMTVEYFKGRGFESRPVHVETVEKGEFFWFDLPSGDLDLADFSARMTATFVPQETGEHIFGMTNAGLARLFVDGELVVDGYDGWTKGENFFGTANSEQRRAVTLGAARRYRVVVEYEAPKASLDGINICALRFGVEKPLGDAGIAEAVETARKSDIVLLLVGREGEWDTEGLDLPDMRLPGRQEELIEAVAETNPNVVVVLQTGGPIEMPWLGKVRAVLQMWYPGQELGNALADVLFGDVEPAGRLPQTFPKALTDNSAITDDPSIYPGQDGHVRYAEGIFVGYRHHDTREIEPLFPFGFGLGYTRFTWGAPQLSGTEMGADGLTVTVDVTNIGDRAGSDVVQLYVHSPNARVERPFKELRAFAKLKLAPGATGTAVLKIAPRDLAYFDVEAGRFRADAGKYELIVAASAIDIRASVSIHLPVDHVMEP.

Residue D222 is part of the active site. A PA14 domain is found at 386–538; the sequence is VFSGEMTVEY…GDAGIAEAVE (153 aa).

Belongs to the glycosyl hydrolase 3 family.

The protein resides in the cytoplasm. It carries out the reaction Hydrolysis of terminal, non-reducing beta-D-glucosyl residues with release of beta-D-glucose.. Its function is as follows. Involved in modifying a vir-inducing plant signal molecule. Hydrolyzes coniferin but not cellobiose. The chain is Beta-glucosidase (cbg-1) from Rhizobium radiobacter (Agrobacterium tumefaciens).